The following is a 37-amino-acid chain: Large ribosomal subunit protein bL36 (37 aa).

It belongs to the bacterial ribosomal protein bL36 family.

The chain is Large ribosomal subunit protein bL36 from Hydrogenobaculum sp. (strain Y04AAS1).